Reading from the N-terminus, the 305-residue chain is Thymidylate synthase (305 aa).

Residues R26 and 160–161 (RR) contribute to the dUMP site. Catalysis depends on C180, which acts as the Nucleophile. Residues 207–210 (RSCD), N218, and 248–250 (HLY) contribute to the dUMP site. D210 lines the (6R)-5,10-methylene-5,6,7,8-tetrahydrofolate pocket. A304 contacts (6R)-5,10-methylene-5,6,7,8-tetrahydrofolate.

Belongs to the thymidylate synthase family. Bacterial-type ThyA subfamily. As to quaternary structure, homodimer.

The protein resides in the cytoplasm. It catalyses the reaction dUMP + (6R)-5,10-methylene-5,6,7,8-tetrahydrofolate = 7,8-dihydrofolate + dTMP. The protein operates within pyrimidine metabolism; dTTP biosynthesis. Its function is as follows. Catalyzes the reductive methylation of 2'-deoxyuridine-5'-monophosphate (dUMP) to 2'-deoxythymidine-5'-monophosphate (dTMP) while utilizing 5,10-methylenetetrahydrofolate (mTHF) as the methyl donor and reductant in the reaction, yielding dihydrofolate (DHF) as a by-product. This enzymatic reaction provides an intracellular de novo source of dTMP, an essential precursor for DNA biosynthesis. This is Thymidylate synthase from Sinorhizobium fredii (strain NBRC 101917 / NGR234).